A 63-amino-acid polypeptide reads, in one-letter code: Large ribosomal subunit protein uL29 (63 aa).

It belongs to the universal ribosomal protein uL29 family.

The sequence is that of Large ribosomal subunit protein uL29 (rpmC) from Aggregatibacter actinomycetemcomitans (Actinobacillus actinomycetemcomitans).